The chain runs to 154 residues: Large ribosomal subunit protein uL13 (154 aa).

The protein belongs to the universal ribosomal protein uL13 family. As to quaternary structure, part of the 50S ribosomal subunit.

Functionally, this protein is one of the early assembly proteins of the 50S ribosomal subunit, although it is not seen to bind rRNA by itself. It is important during the early stages of 50S assembly. The chain is Large ribosomal subunit protein uL13 from Cereibacter sphaeroides (strain ATCC 17025 / ATH 2.4.3) (Rhodobacter sphaeroides).